Reading from the N-terminus, the 567-residue chain is TGF-beta receptor type-2 (567 aa).

The N-terminal stretch at 1-23 (MGRGLLRGLWPLHIVLWTRIAST) is a signal peptide. The Extracellular segment spans residues 24 to 166 (IPPHVPKSVN…SPDLLLVIIQ (143 aa)). Cystine bridges form between Cys-51-Cys-84, Cys-54-Cys-71, Cys-61-Cys-67, Cys-77-Cys-101, Cys-121-Cys-136, and Cys-138-Cys-143. Residues Asn-70 and Asn-94 are each glycosylated (N-linked (GlcNAc...) asparagine). Residues 167–187 (VTGVSLLPPLGIAIAVIAIFY) traverse the membrane as a helical segment. At 188-567 (CYRVHRQQKL…PEDGSLNTTK (380 aa)) the chain is on the cytoplasmic side. A Protein kinase domain is found at 244 to 546 (IELDTLVGKG…RFSELEHPDR (303 aa)). Residues 250-258 (VGKGRFAEV) and Lys-277 contribute to the ATP site. The active-site Proton acceptor is the Asp-379. 3 positions are modified to phosphoserine: Ser-409, Ser-548, and Ser-553. The segment at 546–567 (RLSGRSCSQEKIPEDGSLNTTK) is disordered.

It belongs to the protein kinase superfamily. TKL Ser/Thr protein kinase family. TGFB receptor subfamily. As to quaternary structure, homodimer. Heterohexamer; TGFB1, TGFB2 and TGFB3 homodimeric ligands assemble a functional receptor composed of two TGFBR1 and TGFBR2 heterodimers to form a ligand-receptor heterohexamer. The respective affinity of TGFRB1 and TGFRB2 for the ligands may modulate the kinetics of assembly of the receptor and may explain the different biological activities of TGFB1, TGFB2 and TGFB3. Component of a complex composed of TSC22D1 (via N-terminus), TGFBR1 and TGFBR2; the interaction between TSC22D1 and TGFBR1 is inhibited by SMAD7 and promoted by TGFB1. Interacts with DAXX. Interacts with DYNLT4. Interacts with ZFYVE9; ZFYVE9 recruits SMAD2 and SMAD3 to the TGF-beta receptor. Interacts with and is activated by SCUBE3; this interaction does not affect TGFB1-binding to TGFBR2. Interacts with VPS39; this interaction is independent of the receptor kinase activity and of the presence of TGF-beta. Interacts with CLU. Mg(2+) is required as a cofactor. Requires Mn(2+) as cofactor. Phosphorylated on a Ser/Thr residue in the cytoplasmic domain.

The protein resides in the cell membrane. It localises to the membrane raft. It catalyses the reaction L-threonyl-[receptor-protein] + ATP = O-phospho-L-threonyl-[receptor-protein] + ADP + H(+). It carries out the reaction L-seryl-[receptor-protein] + ATP = O-phospho-L-seryl-[receptor-protein] + ADP + H(+). Functionally, transmembrane serine/threonine kinase forming with the TGF-beta type I serine/threonine kinase receptor, TGFBR1, the non-promiscuous receptor for the TGF-beta cytokines TGFB1, TGFB2 and TGFB3. Transduces the TGFB1, TGFB2 and TGFB3 signal from the cell surface to the cytoplasm and is thus regulating a plethora of physiological and pathological processes including cell cycle arrest in epithelial and hematopoietic cells, control of mesenchymal cell proliferation and differentiation, wound healing, extracellular matrix production, immunosuppression and carcinogenesis. The formation of the receptor complex composed of 2 TGFBR1 and 2 TGFBR2 molecules symmetrically bound to the cytokine dimer results in the phosphorylation and the activation of TGFRB1 by the constitutively active TGFBR2. Activated TGFBR1 phosphorylates SMAD2 which dissociates from the receptor and interacts with SMAD4. The SMAD2-SMAD4 complex is subsequently translocated to the nucleus where it modulates the transcription of the TGF-beta-regulated genes. This constitutes the canonical SMAD-dependent TGF-beta signaling cascade. Also involved in non-canonical, SMAD-independent TGF-beta signaling pathways. The protein is TGF-beta receptor type-2 (Tgfbr2) of Rattus norvegicus (Rat).